The primary structure comprises 333 residues: Complement C1q and tumor necrosis factor-related protein 9B (333 aa).

Positions 1 to 19 (MRIWWLLLAIEICTGNINS) are cleaved as a signal peptide. 3 consecutive Collagen-like domains span residues 24 to 82 (RQGH…DGKV), 95 to 154 (GSPG…PGPM), and 155 to 191 (GPIG…GEKG). Positions 24 to 189 (RQGHPGIPGN…IRGWKGDRGE (166 aa)) are disordered. Residues 26–40 (GHPGIPGNPGHNGLP) show a composition bias toward low complexity. Basic and acidic residues-rich tracts occupy residues 42 to 55 (RDGR…KGDA) and 69 to 88 (TSGE…KGIK). Residues 197–333 (LVLPKSAFTV…FTGFLLFSSQ (137 aa)) enclose the C1q domain.

Interacts with CTRP9A and ADIPOQ. Forms heterotrimers and heterooligomeric complexes with CTRP9A. In terms of tissue distribution, expressed at low levels. Not expressed in adipose tissues.

The protein localises to the secreted. Probable adipokine. Activates AMPK, AKT, and p44/42 MAPK signaling pathways. This Homo sapiens (Human) protein is Complement C1q and tumor necrosis factor-related protein 9B (C1QTNF9B).